Reading from the N-terminus, the 399-residue chain is Tryptophan synthase beta chain (399 aa).

N6-(pyridoxal phosphate)lysine is present on lysine 92.

Belongs to the TrpB family. Tetramer of two alpha and two beta chains. Requires pyridoxal 5'-phosphate as cofactor.

The catalysed reaction is (1S,2R)-1-C-(indol-3-yl)glycerol 3-phosphate + L-serine = D-glyceraldehyde 3-phosphate + L-tryptophan + H2O. It functions in the pathway amino-acid biosynthesis; L-tryptophan biosynthesis; L-tryptophan from chorismate: step 5/5. The beta subunit is responsible for the synthesis of L-tryptophan from indole and L-serine. The chain is Tryptophan synthase beta chain from Legionella pneumophila subsp. pneumophila (strain Philadelphia 1 / ATCC 33152 / DSM 7513).